The chain runs to 369 residues: Allantoicase (369 aa).

Positions 341–369 are disordered; sequence PDSKNNNNNNNNNNNNNTSNSFKTSDRQQ. Residues 345 to 357 are compositionally biased toward low complexity; sequence NNNNNNNNNNNNN.

This sequence belongs to the allantoicase family.

It catalyses the reaction allantoate + H2O = (S)-ureidoglycolate + urea. The protein operates within nitrogen metabolism; (S)-allantoin degradation; (S)-ureidoglycolate from allantoate (aminidohydrolase route): step 1/1. In terms of biological role, utilization of purines as secondary nitrogen sources, when primary sources are limiting. The chain is Allantoicase (allC) from Dictyostelium discoideum (Social amoeba).